Here is a 193-residue protein sequence, read N- to C-terminus: Molybdopterin synthase catalytic subunit (193 aa).

Substrate-binding positions include 118-119 (HR), Lys-134, and 141-143 (KKE). The interval 159–193 (DRTTTDGTTASSPAPATRPAKGGGCCGSKVRANES) is disordered. A compositionally biased stretch (low complexity) spans 163–178 (TDGTTASSPAPATRPA).

Belongs to the MoaE family. MOCS2B subfamily. Heterotetramer; composed of 2 small (MOCS2A) and 2 large (MOCS2B) subunits.

It is found in the cytoplasm. It catalyses the reaction 2 [molybdopterin-synthase sulfur-carrier protein]-C-terminal-Gly-aminoethanethioate + cyclic pyranopterin phosphate + H2O = molybdopterin + 2 [molybdopterin-synthase sulfur-carrier protein]-C-terminal Gly-Gly + 2 H(+). Its pathway is cofactor biosynthesis; molybdopterin biosynthesis. Its function is as follows. Catalytic subunit of the molybdopterin synthase complex, a complex that catalyzes the conversion of precursor Z into molybdopterin. Acts by mediating the incorporation of 2 sulfur atoms from thiocarboxylated MOCS2A into precursor Z to generate a dithiolene group. This chain is Molybdopterin synthase catalytic subunit, found in Oryza sativa subsp. indica (Rice).